The sequence spans 146 residues: MDLSMLRAKLHRLRVTEADLYYEGSITIDEELLDAAGLLPYEKVQVVNVNNGSRLETYTIPGEAGERTVCLNGPAARLAAPGDEVIVIAYAELTPSEAREHHPRVVHVDENNDVTKTRTLDVAKETDENLAPDGMEDVLIAEGPQS.

Catalysis depends on Ser25, which acts as the Schiff-base intermediate with substrate; via pyruvic acid. Ser25 carries the post-translational modification Pyruvic acid (Ser). Residue Thr57 coordinates substrate. Residue Tyr58 is the Proton donor of the active site. 73–75 (GPA) contacts substrate.

The protein belongs to the PanD family. In terms of assembly, heterooctamer of four alpha and four beta subunits. Pyruvate serves as cofactor. Post-translationally, is synthesized initially as an inactive proenzyme, which is activated by self-cleavage at a specific serine bond to produce a beta-subunit with a hydroxyl group at its C-terminus and an alpha-subunit with a pyruvoyl group at its N-terminus.

It localises to the cytoplasm. The enzyme catalyses L-aspartate + H(+) = beta-alanine + CO2. The protein operates within cofactor biosynthesis; (R)-pantothenate biosynthesis; beta-alanine from L-aspartate: step 1/1. Functionally, catalyzes the pyruvoyl-dependent decarboxylation of aspartate to produce beta-alanine. In Salinibacter ruber (strain DSM 13855 / M31), this protein is Aspartate 1-decarboxylase.